The sequence spans 947 residues: Protein translocase subunit SecA (947 aa).

ATP-binding positions include Q87, 105–109, and D525; that span reads GEGKT. The interval 905-928 is disordered; it reads PADNADKTARNPNDPSTWGKVGRN. Zn(2+)-binding residues include C931, C933, C942, and H943.

This sequence belongs to the SecA family. Monomer and homodimer. Part of the essential Sec protein translocation apparatus which comprises SecA, SecYEG and auxiliary proteins SecDF-YajC and YidC. Zn(2+) is required as a cofactor.

The protein localises to the cell inner membrane. It is found in the cytoplasm. The catalysed reaction is ATP + H2O + cellular proteinSide 1 = ADP + phosphate + cellular proteinSide 2.. Functionally, part of the Sec protein translocase complex. Interacts with the SecYEG preprotein conducting channel. Has a central role in coupling the hydrolysis of ATP to the transfer of proteins into and across the cell membrane, serving both as a receptor for the preprotein-SecB complex and as an ATP-driven molecular motor driving the stepwise translocation of polypeptide chains across the membrane. This is Protein translocase subunit SecA from Rhodopseudomonas palustris (strain BisB18).